Reading from the N-terminus, the 490-residue chain is Cobyric acid synthase (490 aa).

The 188-residue stretch at 252 to 439 (RLKVVVPVLP…LHGLFESTAA (188 aa)) folds into the GATase cobBQ-type domain. Catalysis depends on cysteine 333, which acts as the Nucleophile. Histidine 431 is an active-site residue.

The protein belongs to the CobB/CobQ family. CobQ subfamily.

It functions in the pathway cofactor biosynthesis; adenosylcobalamin biosynthesis. In terms of biological role, catalyzes amidations at positions B, D, E, and G on adenosylcobyrinic A,C-diamide. NH(2) groups are provided by glutamine, and one molecule of ATP is hydrogenolyzed for each amidation. The protein is Cobyric acid synthase of Pseudomonas aeruginosa (strain UCBPP-PA14).